We begin with the raw amino-acid sequence, 296 residues long: 4-hydroxy-tetrahydrodipicolinate synthase (296 aa).

Thr-49 serves as a coordination point for pyruvate. The active-site Proton donor/acceptor is the Tyr-137. The active-site Schiff-base intermediate with substrate is Lys-166. Position 208 (Ile-208) interacts with pyruvate.

The protein belongs to the DapA family. Homotetramer; dimer of dimers.

It is found in the cytoplasm. The catalysed reaction is L-aspartate 4-semialdehyde + pyruvate = (2S,4S)-4-hydroxy-2,3,4,5-tetrahydrodipicolinate + H2O + H(+). The protein operates within amino-acid biosynthesis; L-lysine biosynthesis via DAP pathway; (S)-tetrahydrodipicolinate from L-aspartate: step 3/4. Catalyzes the condensation of (S)-aspartate-beta-semialdehyde [(S)-ASA] and pyruvate to 4-hydroxy-tetrahydrodipicolinate (HTPA). The polypeptide is 4-hydroxy-tetrahydrodipicolinate synthase (Chlorobium limicola (strain DSM 245 / NBRC 103803 / 6330)).